A 152-amino-acid chain; its full sequence is MSSKLEQLQALLAPVVEALGYQCWGIEFISQGRHSLLRVYIDHANGILIDDCEKVSRQLSGVLDVEDPISVDYTLEVSSPGMDRPLFTIEQYVAHVGDQVKIKLRSPFEGRRNFQGLLRGVEEQDVVVLVDDHEYLLPIDMIDKANIIPRFD.

It belongs to the RimP family.

It localises to the cytoplasm. In terms of biological role, required for maturation of 30S ribosomal subunits. This is Ribosome maturation factor RimP from Stutzerimonas stutzeri (strain A1501) (Pseudomonas stutzeri).